Here is a 750-residue protein sequence, read N- to C-terminus: 3-isopropylmalate dehydratase (750 aa).

[4Fe-4S] cluster contacts are provided by C353, C413, and C416. The disordered stretch occupies residues 492-524; the sequence is KYDGSPEVFKSTQDTTPAVKPPQPASDSSSSGG.

This sequence belongs to the aconitase/IPM isomerase family. In terms of assembly, monomer. Requires [4Fe-4S] cluster as cofactor.

The catalysed reaction is (2R,3S)-3-isopropylmalate = (2S)-2-isopropylmalate. The protein operates within amino-acid biosynthesis; L-leucine biosynthesis; L-leucine from 3-methyl-2-oxobutanoate: step 2/4. Its function is as follows. Catalyzes the isomerization between 2-isopropylmalate and 3-isopropylmalate, via the formation of 2-isopropylmaleate. The sequence is that of 3-isopropylmalate dehydratase (LEU1) from Rhizopus niveus.